Reading from the N-terminus, the 446-residue chain is Nuclear distribution protein PAC1-1 (446 aa).

The region spanning Gln-9 to Asp-41 is the LisH domain. Positions Ile-60–Ala-86 form a coiled coil. 8 WD repeats span residues Ser-112 to Lys-153, His-155 to Arg-195, Gly-199 to Thr-239, Thr-242 to Ser-281, Gly-284 to Leu-344, Gly-346 to Lys-385, Ala-390 to Arg-430, and Val-432 to Met-446.

This sequence belongs to the WD repeat LIS1/nudF family. Self-associates. Interacts with NDL1 and dynein.

Its subcellular location is the cytoplasm. The protein resides in the cytoskeleton. It is found in the spindle pole. Functionally, positively regulates the activity of the minus-end directed microtubule motor protein dynein. May enhance dynein-mediated microtubule sliding by targeting dynein to the microtubule plus end. Required for nuclear migration during vegetative growth as well as development. Required for retrograde early endosome (EE) transport from the hyphal tip. Required for localization of dynein to the mitotic spindle poles. Recruits additional proteins to the dynein complex at SPBs. The protein is Nuclear distribution protein PAC1-1 of Uncinocarpus reesii (strain UAMH 1704).